The chain runs to 386 residues: Protein RETICULATA-RELATED 4, chloroplastic (386 aa).

Residues 1-61 (MAIASCFFCV…RRVPITPVLS (61 aa)) constitute a chloroplast transit peptide. A disordered region spans residues 61–99 (SASSGNGGSDNNGGGLSGGGGGGDGGKNDGDGHGDEDRD). Gly residues predominate over residues 65-85 (GNGGSDNNGGGLSGGGGGGDG). Over residues 86–99 (GKNDGDGHGDEDRD) the composition is skewed to basic and acidic residues. The next 2 membrane-spanning stretches (helical) occupy residues 201–221 (VVFA…YLPA) and 273–293 (KLFA…NAFI).

The protein belongs to the RETICULATA family.

Its subcellular location is the plastid. The protein resides in the chloroplast membrane. Functionally, may play a role in leaf development. The chain is Protein RETICULATA-RELATED 4, chloroplastic from Arabidopsis thaliana (Mouse-ear cress).